A 118-amino-acid polypeptide reads, in one-letter code: Heavy metal-associated isoprenylated plant protein 47 (118 aa).

The 67-residue stretch at 1-67 folds into the HMA domain; the sequence is MRIKLSVNSE…KACHVTLETL (67 aa). A Cysteine methyl ester modification is found at Cys115. A lipid anchor (S-farnesyl cysteine) is attached at Cys115. The propeptide at 116–118 is removed in mature form; that stretch reads LVM.

The protein belongs to the HIPP family.

Heavy-metal-binding protein. In Arabidopsis thaliana (Mouse-ear cress), this protein is Heavy metal-associated isoprenylated plant protein 47.